The chain runs to 153 residues: Pheromone-binding protein Gp-9 (153 aa).

A signal peptide spans 1 to 19; that stretch reads MKTFVLHIFIFALVAFASA. 3 disulfide bridges follow: Cys37-Cys77, Cys73-Cys129, and Cys118-Cys138.

It belongs to the PBP/GOBP family. In terms of assembly, homodimer.

It localises to the secreted. In terms of biological role, colony queen number, a major feature of social organization, is associated with worker genotype for Gp-9. Colonies are headed by either a single reproductive queen (monogyne form) or multiple queens (polygyne form). Differences in worker Gp-9 genotypes between social forms may cause differences in workers' abilities to recognize queens and regulate their numbers. The chain is Pheromone-binding protein Gp-9 from Solenopsis interrupta (Fire ant).